Consider the following 170-residue polypeptide: Probable inosine/xanthosine triphosphatase (170 aa).

7 to 12 (TTNPVK) serves as a coordination point for substrate. Aspartate 37 is a Mg(2+) binding site.

The protein belongs to the YjjX NTPase family. In terms of assembly, homodimer. Mg(2+) is required as a cofactor. The cofactor is Mn(2+).

It catalyses the reaction XTP + H2O = XDP + phosphate + H(+). It carries out the reaction ITP + H2O = IDP + phosphate + H(+). Functionally, phosphatase that hydrolyzes non-canonical purine nucleotides such as XTP and ITP to their respective diphosphate derivatives. Probably excludes non-canonical purines from DNA/RNA precursor pool, thus preventing their incorporation into DNA/RNA and avoiding chromosomal lesions. The sequence is that of Probable inosine/xanthosine triphosphatase from Methanopyrus kandleri (strain AV19 / DSM 6324 / JCM 9639 / NBRC 100938).